The following is a 309-amino-acid chain: Polyprenal reductase (309 aa).

The next 7 membrane-spanning stretches (helical) occupy residues 12–32 (LPLYLLVSTLGLAISCCFTLI), 72–92 (FYAIGLLTLFICLHTVHSLIY), 114–134 (IPPITPSTSILALLLISLHVA), 151–171 (MNLFHYAVGIVHYIILPISIM), 184–204 (LHVSIDDISLTQWAGAVLFWI), 242–262 (LVSCPHFLFEICIYLSLFLVI), and 270–290 (FIIMFVCINQTFAALITHSWY).

It belongs to the steroid 5-alpha reductase family. Polyprenal reductase subfamily.

The protein localises to the endoplasmic reticulum membrane. The enzyme catalyses a di-trans,poly-cis-dolichal + NADP(+) = a di-trans,poly-cis-polyprenal + NADPH + H(+). The protein operates within protein modification; protein glycosylation. Functionally, plays a key role in early steps of protein N-linked glycosylation by being involved in the conversion of polyprenol into dolichol. Acts as a polyprenal reductase that mediates the reduction of polyprenal into dolichal in a NADP-dependent mechanism. Dolichols are required for the synthesis of dolichol-linked monosaccharides and the oligosaccharide precursor used for N-glycosylation. This is Polyprenal reductase from Caenorhabditis elegans.